The sequence spans 580 residues: Type 3 secretion system translocon protein SctE (580 aa).

2 consecutive transmembrane segments (helical) span residues 313–333 (ILGALLTIVSVVAAAFSGGAS) and 399–419 (IGSILGAIAGALVLVAAVVLV).

The protein belongs to the SctE/SipB/YopB family. In terms of assembly, the core secretion machinery of the T3SS is composed of approximately 20 different proteins, including cytoplasmic components, a base, an export apparatus and a needle. This subunit is involved in the formation of a pore, called the translocon, in host membrane.

The protein resides in the secreted. The protein localises to the host membrane. Its function is as follows. Component of the type III secretion system (T3SS), also called injectisome, which is used to inject bacterial effector proteins into eukaryotic host cells. IpaB/SctE and IpaC/SctB are inserted into the host membrane where they form a pore and allow the translocation of effector proteins into the cytosol of target cells. The chain is Type 3 secretion system translocon protein SctE from Shigella dysenteriae.